A 202-amino-acid polypeptide reads, in one-letter code: Glycerol-3-phosphate acyltransferase (202 aa).

6 consecutive transmembrane segments (helical) span residues 2-22 (MIVL…GVII), 54-74 (FVVT…PLLF), 85-105 (FFTN…YPIF), 118-138 (AGVV…IFFL), 140-160 (LYLT…CVIG), and 162-182 (LIIH…LLIF).

This sequence belongs to the PlsY family. In terms of assembly, probably interacts with PlsX.

The protein localises to the cell membrane. The enzyme catalyses an acyl phosphate + sn-glycerol 3-phosphate = a 1-acyl-sn-glycero-3-phosphate + phosphate. The protein operates within lipid metabolism; phospholipid metabolism. Functionally, catalyzes the transfer of an acyl group from acyl-phosphate (acyl-PO(4)) to glycerol-3-phosphate (G3P) to form lysophosphatidic acid (LPA). This enzyme utilizes acyl-phosphate as fatty acyl donor, but not acyl-CoA or acyl-ACP. The protein is Glycerol-3-phosphate acyltransferase of Staphylococcus carnosus (strain TM300).